A 375-amino-acid chain; its full sequence is WAT1-related protein At1g70260 (375 aa).

10 consecutive transmembrane segments (helical) span residues 10–30, 41–61, 72–92, 106–126, 143–163, 191–211, 225–245, 259–278, 289–309, and 312–332; these read LVPF…TIMA, FVFV…FSFL, IFSW…IFMF, IVVC…SIIL, MGTI…GPFI, WFLG…FNVV, VASF…LFME, LYLI…SVHV, VPLF…SFFV, and LHYG…TVSW. The region spanning 25–134 is the EamA domain; sequence ALTIMAKTAL…ILGRSKLDWR (110 aa). Residues 337 to 356 are disordered; that stretch reads ESEEKQSSNEERKSIKTIHH.

The protein belongs to the drug/metabolite transporter (DMT) superfamily. Plant drug/metabolite exporter (P-DME) (TC 2.A.7.4) family.

Its subcellular location is the membrane. The protein is WAT1-related protein At1g70260 of Arabidopsis thaliana (Mouse-ear cress).